The primary structure comprises 196 residues: Ribonuclease HII (196 aa).

The 184-residue stretch at leucine 13–phenylalanine 196 folds into the RNase H type-2 domain. 3 residues coordinate a divalent metal cation: aspartate 19, glutamate 20, and aspartate 111.

Belongs to the RNase HII family. Mn(2+) is required as a cofactor. Mg(2+) serves as cofactor.

The protein localises to the cytoplasm. The enzyme catalyses Endonucleolytic cleavage to 5'-phosphomonoester.. Its function is as follows. Endonuclease that specifically degrades the RNA of RNA-DNA hybrids. This Aquifex aeolicus (strain VF5) protein is Ribonuclease HII (rnhB).